Reading from the N-terminus, the 111-residue chain is Ribulose bisphosphate carboxylase small subunit (111 aa).

This sequence belongs to the RuBisCO small chain family. Heterohexadecamer of 8 large and 8 small subunits. The CcmM short form purifies from carboxysomes in complex with both RuBisCO subunits; a second complex with full-length CcmM and RuBisCO also includes carbonic anhydrase (CA, ccaA). RuBisCO-CcmM complexes are probably associated with the carboxysome shell. Isolated reduced and oxidized SSUL1 binds holo-RuBisCO (RbcL(8)-RbcS(8)) but not either subunit octamer alone; RuBisCO has a higher affinity for reduced SSUL1.

It is found in the carboxysome. Its function is as follows. RuBisCO catalyzes two reactions: the carboxylation of D-ribulose 1,5-bisphosphate, the primary event in carbon dioxide fixation, as well as the oxidative fragmentation of the pentose substrate in the photorespiration process. Both reactions occur simultaneously and in competition at the same active site. Beta-carboxysome assembly initiates when soluble RuBisCO aggregates is condensed into a liquid matrix in a pre-carboxysome by the RbcS-like domains of probably both CcmM58 and CcmM35. CcmN interacts with the N-terminus of CcmM58, and then recruits the CcmK2 major shell protein via CcmN's encapsulation peptide. Shell formation requires CcmK proteins and CcmO. CcmL caps the otherwise elongated carboxysome. Once fully encapsulated carboxysomes are formed, they migrate within the cell probably via interactions with the cytoskeleton. The chain is Ribulose bisphosphate carboxylase small subunit from Synechococcus elongatus (strain ATCC 33912 / PCC 7942 / FACHB-805) (Anacystis nidulans R2).